The chain runs to 124 residues: UPF0342 protein DSY2926 (124 aa).

Belongs to the UPF0342 family.

The polypeptide is UPF0342 protein DSY2926 (Desulfitobacterium hafniense (strain Y51)).